The primary structure comprises 435 residues: Palmitoyltransferase pfa4 (435 aa).

Residues 1-10 (MLCSSFSVSR) lie on the Cytoplasmic side of the membrane. Residues 11 to 31 (LAIPAVCILIAFLAYTSQIFF) traverse the membrane as a helical segment. Over 32–48 (LYFEDAPLKEDEVWRIN) the chain is Lumenal. The helical transmembrane segment at 49–69 (ILAICIWICYYRACTVDPGHV) threads the bilayer. The Cytoplasmic segment spans residues 70–129 (PKGWMPSDRERLKADRASGRQRWCRRCEAYKPPRAHHCKTCERCVPKMDHHCPWTSNCVS). In terms of domain architecture, DHHC spans 91–141 (RWCRRCEAYKPPRAHHCKTCERCVPKMDHHCPWTSNCVSHFTFPHFARFLF). Cysteine 121 serves as the catalytic S-palmitoyl cysteine intermediate. The chain crosses the membrane as a helical span at residues 130–150 (HFTFPHFARFLFYAVVGIAYL). Residues 151–179 (ETRLWQRVSKVWGSRHLPSYLGPSMGQIG) lie on the Lumenal side of the membrane. The helical transmembrane segment at 180–200 (HLFVLFVTNSLTLFALSLLLL) threads the bilayer. Over 201–435 (RTLWSLGSNT…QRAKRQHLSQ (235 aa)) the chain is Cytoplasmic. Residues 359 to 368 (RKPFHVRLEE) show a composition bias toward basic and acidic residues. The tract at residues 359 to 408 (RKPFHVRLEEYSNGSSDAEADTGSDDDSDHGEEGWKNSEGERLRDFGVDE) is disordered. Residues 376–388 (AEADTGSDDDSDH) show a composition bias toward acidic residues. The span at 389–405 (GEEGWKNSEGERLRDFG) shows a compositional bias: basic and acidic residues.

The protein belongs to the DHHC palmitoyltransferase family. PFA4 subfamily.

The protein resides in the endoplasmic reticulum membrane. It catalyses the reaction L-cysteinyl-[protein] + hexadecanoyl-CoA = S-hexadecanoyl-L-cysteinyl-[protein] + CoA. Mediates the reversible addition of palmitate to target proteins, thereby regulating their membrane association and biological function. The sequence is that of Palmitoyltransferase pfa4 from Emericella nidulans (strain FGSC A4 / ATCC 38163 / CBS 112.46 / NRRL 194 / M139) (Aspergillus nidulans).